The sequence spans 549 residues: Cytoplasmic trehalase (549 aa).

Residues Arg-168, 175–176, Asn-212, 221–223, 292–294, and Gly-324 contribute to the substrate site; these read WD, RSQ, and RDE. Catalysis depends on proton donor/acceptor residues Asp-326 and Glu-509. Glu-525 provides a ligand contact to substrate.

Belongs to the glycosyl hydrolase 37 family. In terms of assembly, monomer.

It localises to the cytoplasm. The enzyme catalyses alpha,alpha-trehalose + H2O = alpha-D-glucose + beta-D-glucose. It functions in the pathway glycan degradation; trehalose degradation; D-glucose from alpha,alpha-trehalose: step 1/1. Hydrolyzes trehalose to glucose. Could be involved, in cells returning to low osmolarity conditions, in the utilization of the accumulated cytoplasmic trehalose, which was synthesized in response to high osmolarity. In Salmonella choleraesuis (strain SC-B67), this protein is Cytoplasmic trehalase.